Here is a 785-residue protein sequence, read N- to C-terminus: Transcription factor Sp1 (785 aa).

Residues 1 to 93 (MSDQDHSMDE…PSQSGGTGEL (93 aa)) are disordered. N-acetylserine is present on S2. A phosphoserine mark is found at S2 and S7. The repressor domain stretch occupies residues 2 to 82 (SDQDHSMDEM…SPNENSNNSQ (81 aa)). K16 participates in a covalent cross-link: Glycyl lysine isopeptide (Lys-Gly) (interchain with G-Cter in SUMO); alternate. A Glycyl lysine isopeptide (Lys-Gly) (interchain with G-Cter in SUMO2); alternate cross-link involves residue K16. The segment covering 20–34 (GVGGNNGGNGNGGGA) has biased composition (gly residues). S59 is modified (phosphoserine). Positions 72 to 85 (ESPNENSNNSQGPS) are enriched in low complexity. S101 carries the phosphoserine; by ATM modification. Polar residues predominate over residues 109–123 (IISSSSGATPTSKEQ). The disordered stretch occupies residues 109 to 141 (IISSSSGATPTSKEQSGSSTNGSNGSESSKNRT). A compositionally biased stretch (low complexity) spans 124–136 (SGSSTNGSNGSES). Residues 146-251 (QYVVAAAPNL…ANNVLSGQTQ (106 aa)) form a transactivation domain A (Gln-rich) region. The transactivation domain B (Gln-rich) stretch occupies residues 261–495 (NGNITLLPVN…PMQGVSLGQT (235 aa)). T278 carries the phosphothreonine; by MAPK8 modification. Residues 329-395 (TTTTTSNMGI…KEGEQNQQTQ (67 aa)) are disordered. Positions 342 to 357 (TTSGSSGTNSQGQTPQ) are enriched in low complexity. The segment covering 358–379 (RVSGLQGSDALNIQQNQTSGGS) has biased composition (polar residues). The span at 381 to 395 (QAGQQKEGEQNQQTQ) shows a compositional bias: low complexity. At T453 the chain carries Phosphothreonine; by MAPK1 and MAPK3. Positions 462 to 470 (VSWQTLQLQ) match the 9aaTAD motif. S491 is a glycosylation site (O-linked (GlcNAc) serine). Residues 496 to 610 (SSSNTTLTPI…REACTCPYCK (115 aa)) form a transactivation domain C (highly charged) region. The tract at residues 567–598 (LHGAGGDGIHDDTAGGEEGENSPDAQPQAGRR) is disordered. S612 carries the post-translational modification Phosphoserine; alternate. S612 is a glycosylation site (O-linked (GlcNAc) serine; alternate). The VZV IE62-binding stretch occupies residues 619–785 (DPGKKKQHIC…QSINISGNGF (167 aa)). A C2H2-type 1 zinc finger spans residues 626–650 (HICHIQGCGKVYGKTSHLRAHLRWH). A Phosphothreonine; alternate modification is found at T640. T640 carries O-linked (GlcNAc) threonine; alternate glycosylation. O-linked (GlcNAc) serine; alternate glycosylation occurs at S641. S641 carries the phosphoserine; by PKC/PRKCZ; alternate modification. T651 is modified (phosphothreonine; by PKC/PRKCZ). The C2H2-type 2 zinc finger occupies 656 to 680 (FMCTWSYCGKRFTRSDELQRHKRTH). Residue T668 is modified to Phosphothreonine. S670 is modified (phosphoserine; by PKC/PRKCZ). Position 681 is a phosphothreonine; by PKC/PRKCZ (T681). The C2H2-type 3 zinc-finger motif lies at 686-708 (FACPECPKRFMRSDHLSKHIKTH). Residues S698 and S702 each carry the phosphoserine; alternate modification. 2 O-linked (GlcNAc) serine; alternate glycosylation sites follow: S698 and S702. Residue K703 is modified to N6-acetyllysine. The tract at residues 708–785 (HQNKKGGPGV…QSINISGNGF (78 aa)) is domain D. Phosphothreonine; by MAPK1, MAPK3 and MAPK8 is present on T739.

This sequence belongs to the Sp1 C2H2-type zinc-finger protein family. As to quaternary structure, interacts with ATF7IP, ATF7IP2, BAHD1, POGZ, HCFC1, AATF and PHC2. Interacts with HLTF; the interaction may be required for basal transcriptional activity of HLTF. Interacts (deacetylated form) with EP300; the interaction enhances gene expression. Interacts with HDAC1 and JUN. Interacts with ELF1; the interaction is inhibited by glycosylation of SP1. Interaction with NFYA; the interaction is inhibited by glycosylation of SP1. Interacts with ATF7IP and TBP. Interacts with MEIS2 isoform 4 and PBX1 isoform PBX1a. Interacts with EGR1. Interacts with SMARCA4/BRG1. Interacts with RNF112 in an oxidative stress-regulated manner. Interacts with ZBTB7A; ZBTB7A prevents the binding to GC-rich motifs in promoters and represses the transcriptional activity of SP1. Interacts with DDX3X; this interaction potentiates SP1-induced CDKN1A/WAF1/CIP1 transcription. Interacts with MSX1; the interaction may inhibit MSX1 autoinactivation. (Microbial infection) Interacts with varicella-zoster virus IE62 protein. In terms of assembly, (Microbial infection) Interacts with SV40 VP2/3 proteins. Interacts with SV40 major capsid protein VP1; this interaction leads to a cooperativity between the 2 proteins in DNA binding. As to quaternary structure, (Microbial infection) Interacts with HIV-1 Vpr; the interaction is inhibited by SP1 O-glycosylation. In terms of processing, phosphorylated on multiple serine and threonine residues. Phosphorylation is coupled to ubiquitination, sumoylation and proteolytic processing. Phosphorylation on Ser-59 enhances proteolytic cleavage. Phosphorylation on Ser-7 enhances ubiquitination and protein degradation. Hyperphosphorylation on Ser-101 in response to DNA damage has no effect on transcriptional activity. MAPK1/MAPK3-mediated phosphorylation on Thr-453 and Thr-739 enhances VEGF transcription but, represses FGF2-triggered PDGFR-alpha transcription. Also implicated in the repression of RECK by ERBB2. Hyperphosphorylated on Thr-278 and Thr-739 during mitosis by MAPK8 shielding SP1 from degradation by the ubiquitin-dependent pathway. Phosphorylated in the zinc-finger domain by calmodulin-activated PKCzeta. Phosphorylation on Ser-641 by PKCzeta is critical for TSA-activated LHR gene expression through release of its repressor, p107. Phosphorylation on Thr-668, Ser-670 and Thr-681 is stimulated by angiotensin II via the AT1 receptor inducing increased binding to the PDGF-D promoter. This phosphorylation is increased in injured artey wall. Ser-59 and Thr-681 can both be dephosphorylated by PP2A during cell-cycle interphase. Dephosphorylation on Ser-59 leads to increased chromatin association during interphase and increases the transcriptional activity. On insulin stimulation, sequentially glycosylated and phosphorylated on several C-terminal serine and threonine residues. Acetylated. Acetylation/deacetylation events affect transcriptional activity. Deacetylation leads to an increase in the expression of the 12(s)-lipooxygenase gene through recruitment of p300 to the promoter. Deacetylated by HDAC6 which leads to increased expression of ENG and positive regulation of angiogenesis. Post-translationally, ubiquitinated. Ubiquitination occurs on the C-terminal proteolytically-cleaved peptide and is triggered by phosphorylation. In terms of processing, sumoylated with SUMO1. Sumoylation modulates proteolytic cleavage of the N-terminal repressor domain. Sumoylation levels are attenuated during tumorigenesis. Phosphorylation mediates SP1 desumoylation. Proteolytic cleavage in the N-terminal repressor domain is prevented by sumoylation. The C-terminal cleaved product is susceptible to degradation. Post-translationally, O-glycosylated; Contains 8 N-acetylglucosamine side chains. Levels are controlled by insulin and the SP1 phosphorylation states. Insulin-mediated O-glycosylation locates SP1 to the nucleus, where it is sequentially deglycosylated and phosphorylated. O-glycosylation affects transcriptional activity through disrupting the interaction with a number of transcription factors including ELF1 and NFYA. Also inhibits interaction with the HIV1 promoter. Inhibited by peroxisomome proliferator receptor gamma (PPARgamma). Up-regulated in adenocarcinomas of the stomach (at protein level). Isoform 3 is ubiquitously expressed at low levels.

It localises to the nucleus. It is found in the cytoplasm. Its function is as follows. Transcription factor that can activate or repress transcription in response to physiological and pathological stimuli. Binds with high affinity to GC-rich motifs and regulates the expression of a large number of genes involved in a variety of processes such as cell growth, apoptosis, differentiation and immune responses. Highly regulated by post-translational modifications (phosphorylations, sumoylation, proteolytic cleavage, glycosylation and acetylation). Also binds the PDGFR-alpha G-box promoter. May have a role in modulating the cellular response to DNA damage. Implicated in chromatin remodeling. Plays an essential role in the regulation of FE65 gene expression. In complex with ATF7IP, maintains telomerase activity in cancer cells by inducing TERT and TERC gene expression. Isoform 3 is a stronger activator of transcription than isoform 1. Positively regulates the transcription of the core clock component BMAL1. Plays a role in the recruitment of SMARCA4/BRG1 on the c-FOS promoter. Plays a role in protecting cells against oxidative stress following brain injury by regulating the expression of RNF112. The protein is Transcription factor Sp1 (SP1) of Homo sapiens (Human).